A 383-amino-acid polypeptide reads, in one-letter code: 8-amino-7-oxononanoate synthase (383 aa).

Arginine 22 is a binding site for substrate. A pyridoxal 5'-phosphate-binding site is contributed by 109 to 110 (GF). Substrate is bound at residue histidine 134. Pyridoxal 5'-phosphate contacts are provided by serine 178, histidine 206, and threonine 232. Lysine 235 carries the post-translational modification N6-(pyridoxal phosphate)lysine. Threonine 348 lines the substrate pocket.

Belongs to the class-II pyridoxal-phosphate-dependent aminotransferase family. BioF subfamily. In terms of assembly, homodimer. Requires pyridoxal 5'-phosphate as cofactor.

It catalyses the reaction 6-carboxyhexanoyl-[ACP] + L-alanine + H(+) = (8S)-8-amino-7-oxononanoate + holo-[ACP] + CO2. It participates in cofactor biosynthesis; biotin biosynthesis. Catalyzes the decarboxylative condensation of pimeloyl-[acyl-carrier protein] and L-alanine to produce 8-amino-7-oxononanoate (AON), [acyl-carrier protein], and carbon dioxide. In Vibrio campbellii (strain ATCC BAA-1116), this protein is 8-amino-7-oxononanoate synthase.